The chain runs to 424 residues: Serine--tRNA ligase (424 aa).

Position 233-235 (233-235 (TAE)) interacts with L-serine. 264 to 266 (RKE) is an ATP binding site. Glutamate 287 is a binding site for L-serine. 351–354 (EISS) lines the ATP pocket. Position 386 (serine 386) interacts with L-serine.

The protein belongs to the class-II aminoacyl-tRNA synthetase family. Type-1 seryl-tRNA synthetase subfamily. As to quaternary structure, homodimer. The tRNA molecule binds across the dimer.

Its subcellular location is the cytoplasm. The catalysed reaction is tRNA(Ser) + L-serine + ATP = L-seryl-tRNA(Ser) + AMP + diphosphate + H(+). It catalyses the reaction tRNA(Sec) + L-serine + ATP = L-seryl-tRNA(Sec) + AMP + diphosphate + H(+). Its pathway is aminoacyl-tRNA biosynthesis; selenocysteinyl-tRNA(Sec) biosynthesis; L-seryl-tRNA(Sec) from L-serine and tRNA(Sec): step 1/1. Its function is as follows. Catalyzes the attachment of serine to tRNA(Ser). Is also able to aminoacylate tRNA(Sec) with serine, to form the misacylated tRNA L-seryl-tRNA(Sec), which will be further converted into selenocysteinyl-tRNA(Sec). In Elusimicrobium minutum (strain Pei191), this protein is Serine--tRNA ligase.